The sequence spans 533 residues: Bifunctional purine biosynthesis protein PurH (533 aa).

An MGS-like domain is found at 1 to 148; sequence MQPNRPIRQA…KNHQDVAIVV (148 aa).

It belongs to the PurH family.

It catalyses the reaction (6R)-10-formyltetrahydrofolate + 5-amino-1-(5-phospho-beta-D-ribosyl)imidazole-4-carboxamide = 5-formamido-1-(5-phospho-D-ribosyl)imidazole-4-carboxamide + (6S)-5,6,7,8-tetrahydrofolate. It carries out the reaction IMP + H2O = 5-formamido-1-(5-phospho-D-ribosyl)imidazole-4-carboxamide. Its pathway is purine metabolism; IMP biosynthesis via de novo pathway; 5-formamido-1-(5-phospho-D-ribosyl)imidazole-4-carboxamide from 5-amino-1-(5-phospho-D-ribosyl)imidazole-4-carboxamide (10-formyl THF route): step 1/1. It participates in purine metabolism; IMP biosynthesis via de novo pathway; IMP from 5-formamido-1-(5-phospho-D-ribosyl)imidazole-4-carboxamide: step 1/1. This is Bifunctional purine biosynthesis protein PurH from Pasteurella multocida (strain Pm70).